A 212-amino-acid chain; its full sequence is Thymidylate kinase (212 aa).

13–20 (GLEGAGKS) lines the ATP pocket.

It belongs to the thymidylate kinase family.

The enzyme catalyses dTMP + ATP = dTDP + ADP. Its function is as follows. Phosphorylation of dTMP to form dTDP in both de novo and salvage pathways of dTTP synthesis. This Legionella pneumophila (strain Paris) protein is Thymidylate kinase.